The primary structure comprises 294 residues: Undecaprenyl-diphosphatase (294 aa).

The next 6 membrane-spanning stretches (helical) occupy residues 39-59 (PGAA…ILYF), 93-113 (TQMG…GLLF), 123-143 (NLWI…VVDA), 197-217 (VSFL…AVSA), 234-254 (ATIA…IGFL), and 265-285 (FAIY…CGVL).

This sequence belongs to the UppP family.

Its subcellular location is the cell membrane. The enzyme catalyses di-trans,octa-cis-undecaprenyl diphosphate + H2O = di-trans,octa-cis-undecaprenyl phosphate + phosphate + H(+). In terms of biological role, catalyzes the dephosphorylation of undecaprenyl diphosphate (UPP). Confers resistance to bacitracin. The chain is Undecaprenyl-diphosphatase from Bifidobacterium adolescentis (strain ATCC 15703 / DSM 20083 / NCTC 11814 / E194a).